A 1155-amino-acid polypeptide reads, in one-letter code: PAN2-PAN3 deadenylation complex catalytic subunit pan2 (1155 aa).

2 WD repeats span residues threonine 102–proline 145 and alanine 276–glutamate 315. The interval methionine 316–aspartate 452 is linker. One can recognise a USP domain in the interval aspartate 453–lysine 822. Residues valine 871 to leucine 1049 form the Exonuclease domain. Residues aspartate 874, glutamate 876, aspartate 983, and aspartate 1042 each coordinate a divalent metal cation. The disordered stretch occupies residues threonine 1095–lysine 1155. Over residues valine 1097–asparagine 1106 the composition is skewed to polar residues. Low complexity predominate over residues threonine 1107–proline 1124.

The protein belongs to the peptidase C19 family. PAN2 subfamily. Forms a heterotrimer with an asymmetric homodimer of the regulatory subunit pan3 to form the poly(A)-nuclease (PAN) deadenylation complex. It depends on a divalent metal cation as a cofactor.

The protein localises to the cytoplasm. The catalysed reaction is Exonucleolytic cleavage of poly(A) to 5'-AMP.. Its activity is regulated as follows. Positively regulated by the regulatory subunit pan3. In terms of biological role, catalytic subunit of the poly(A)-nuclease (PAN) deadenylation complex, one of two cytoplasmic mRNA deadenylases involved in mRNA turnover. PAN specifically shortens poly(A) tails of RNA and the activity is stimulated by poly(A)-binding protein pab1. PAN deadenylation is followed by rapid degradation of the shortened mRNA tails by the CCR4-NOT complex. Deadenylated mRNAs are then degraded by two alternative mechanisms, namely exosome-mediated 3'-5' exonucleolytic degradation, or deadenylation-dependent mRNA decaping and subsequent 5'-3' exonucleolytic degradation by xrn1. May also be involved in post-transcriptional maturation of mRNA poly(A) tails. The polypeptide is PAN2-PAN3 deadenylation complex catalytic subunit pan2 (Aspergillus oryzae (strain ATCC 42149 / RIB 40) (Yellow koji mold)).